The following is a 305-amino-acid chain: Serine/threonine-protein phosphatase 4 catalytic subunit (305 aa).

Mn(2+) is bound by residues Asp52, His54, Asp80, and Asn112. His113 acts as the Proton donor in catalysis. Residues His162 and His236 each coordinate Mn(2+).

It belongs to the PPP phosphatase family. PP-4 (PP-X) subfamily. As to quaternary structure, serine/threonine-protein phosphatase 4 (PP4) occurs in different assemblies of the catalytic and one or more regulatory subunits. Probably part of a PP4 complex containing ppp4c and ppp4r2. Interacts with smkA. Requires Mn(2+) as cofactor.

It is found in the cytoplasm. Its subcellular location is the nucleus. It catalyses the reaction O-phospho-L-seryl-[protein] + H2O = L-seryl-[protein] + phosphate. The catalysed reaction is O-phospho-L-threonyl-[protein] + H2O = L-threonyl-[protein] + phosphate. Required for development, chemotaxis and the expression of numerous genes. The polypeptide is Serine/threonine-protein phosphatase 4 catalytic subunit (ppp4c) (Dictyostelium discoideum (Social amoeba)).